A 571-amino-acid polypeptide reads, in one-letter code: Phosphoenolpyruvate-protein phosphotransferase (571 aa).

Residue His189 is the Tele-phosphohistidine intermediate of the active site. Residues Arg296 and Arg332 each coordinate phosphoenolpyruvate. Residues Glu431 and Asp455 each coordinate Mg(2+). Phosphoenolpyruvate is bound by residues 454–455 (ND) and Arg465. Residue Cys502 is the Proton donor of the active site.

It belongs to the PEP-utilizing enzyme family. As to quaternary structure, homodimer. Mg(2+) serves as cofactor.

Its subcellular location is the cytoplasm. The catalysed reaction is L-histidyl-[protein] + phosphoenolpyruvate = N(pros)-phospho-L-histidyl-[protein] + pyruvate. Functionally, general (non sugar-specific) component of the phosphoenolpyruvate-dependent sugar phosphotransferase system (sugar PTS). This major carbohydrate active-transport system catalyzes the phosphorylation of incoming sugar substrates concomitantly with their translocation across the cell membrane. Enzyme I transfers the phosphoryl group from phosphoenolpyruvate (PEP) to the phosphoryl carrier protein (HPr). This Buchnera aphidicola subsp. Acyrthosiphon pisum (strain APS) (Acyrthosiphon pisum symbiotic bacterium) protein is Phosphoenolpyruvate-protein phosphotransferase (ptsI).